A 395-amino-acid chain; its full sequence is Yellow-related salivary protein M35 (395 aa).

A signal peptide spans methionine 1 to serine 18.

Belongs to the major royal jelly protein family. As to expression, salivary gland (at protein level).

The protein localises to the secreted. In terms of biological role, probably modulates blood feeding of sand flies on vertebrate species by binding and sequestering different mediators involved in the host response. Functions as a chemoattractant for host neutrophils; likely acts through a G-protein-coupled receptor and effect is dependent on calcium influx and phosphatidylinositol 3-kinases (PI3K) activity. Its function is as follows. (Microbial infection) Probably enhances infection caused by Leishmania species in the host through augmentation of host neutrophil recruitment into the skin. The chain is Yellow-related salivary protein M35 from Phlebotomus duboscqi (Sandfly).